The sequence spans 120 residues: Ribonuclease P protein component 2 (120 aa).

It belongs to the eukaryotic/archaeal RNase P protein component 2 family. As to quaternary structure, consists of a catalytic RNA component and at least 4-5 protein subunits. Forms a subcomplex with Rnp3 which stimulates the catalytic RNA.

Its subcellular location is the cytoplasm. The catalysed reaction is Endonucleolytic cleavage of RNA, removing 5'-extranucleotides from tRNA precursor.. Part of ribonuclease P, a protein complex that generates mature tRNA molecules by cleaving their 5'-ends. The RNA is catalytic, but its KM for pre-tRNA is 170-fold decreased in the presence of the 4 known protein subunits (Rnp1-4). The protein subunits also decrease the amount of Mg(2+) needed for activity. This is Ribonuclease P protein component 2 from Pyrococcus furiosus (strain ATCC 43587 / DSM 3638 / JCM 8422 / Vc1).